Consider the following 314-residue polypeptide: RNA 2'-O-methyltransferase FBLL1 (314 aa).

Residues 1–59 (MKPAGGRGGWGWGGGKGGSKGGDTGSGTKGGFGARTRGSSGGGRGRGRGGGGGGGGGGG) are compositionally biased toward gly residues. The tract at residues 1-82 (MKPAGGRGGW…RRKKGITVSV (82 aa)) is disordered. Arg-7 carries the post-translational modification Omega-N-methylarginine. A compositionally biased stretch (basic residues) spans 64-77 (RGGPGKNKNRRKKG). S-adenosyl-L-methionine is bound by residues 166-167 (TT), 185-186 (EF), 210-211 (DA), and 230-233 (DVAQ).

It belongs to the methyltransferase superfamily. Fibrillarin family. As to quaternary structure, component of a box C/D small nucleolar ribonucleoprotein (snoRNP) complex composed of FBLL1, SNU13/NHP2L1, NOP56 and NOP58 and a guide snoRNA which mediates 2'-hydroxyl ribose methylation in RNAs.

The protein resides in the nucleus. Its subcellular location is the nucleolus. The catalysed reaction is a ribonucleotide in RNA + S-adenosyl-L-methionine = a 2'-O-methylribonucleotide in RNA + S-adenosyl-L-homocysteine + H(+). In terms of biological role, S-adenosyl-L-methionine-dependent RNA methyltransferase that catalyzes 2'-hydroxyl ribose methylation in RNAs. Functions as part of box C/D small nucleolar ribonucleoprotein (snoRNP) complexes, where guide snoRNAs ensure methylation specificity through base pairing with RNA substrates. Exhibits broad substrate specificity, methylating multiple sites on ribosomal RNAs (rRNAs) and messenger RNAs (mRNAs) depending on the guide snoRNA incorporated in the complex. Specifically expressed in brain, it regulates the expression of GAP43 by stabilizing its mRNA through methylation and thereby plays an indirect role in neuronal differentiation. The sequence is that of RNA 2'-O-methyltransferase FBLL1 from Mus musculus (Mouse).